Reading from the N-terminus, the 1485-residue chain is MSSQDESASSSDTGEGGHVFGRENLNQSADYGYKTGSSASTHSTTDDAISEEPQPSGNGPRSIIARAYQLEMFQASMQQNIIVSMDTGSGKTQVAVLRIRAELERTPPEKRVWFLAPTVALCAQQYEVIRSQIKVANSIVMTGDDNVDSWSDVQTWDAVLANVRVVVCTYMILFEALSHAFVTMDSISLLVMDEAHNCTGKFPGRLIMKRFYMPRKSAGDHVPHILGLTASPVMKSDLSSMEDLESSLDSVCRGPTLQREELFANVHQPTMTVTTYKECDLRSPVQYTRNMNNLHLAFENLDIAEDPYVLHLMGQRTPKSLRELDRILTKLDTYTQNQMKALQRKSSSLFRELGQWAVDSYIYNVVEKVSNLDARSSWLGGWLDDEQRYLHRAIQGINALPVSAAIPAPEMTSIKLQVLLRILRGYEGSPVGIVFVKERATAGILSQLLAIIPDINARYKVGCMVGTSRYMSRKMNIHEVLQQGDDLLALEKFRSGAINLLVATSVLEEGIDVPVCNLVICFDMPANLKSFIQRRGRARMRESKLHLMIEEDSLVSVKDWGALEAAMKQRYENDMRELDHLAQVEEEDEMDVPPLHSRTTAAKVTVDDAKGHLEHFCRVVTRSQQYVDASPEYLVTTKTTAFVGGKPIPILGVTVLLPASLPPNLRQAHSSRDWISERNAKKDAALQAYKMLYEAGLINEHLLPIRESDFVDREVDGRPGLLEVQEQWNPWPCIVEAWETGLSSQTIHRRRLQLTDQDGMLMGELDALLPVPFPPISILKLYWIQHSEHPWTISFDPDVTMSGPGSTDPSFEIQQALDQTQILLDMAFGHRFSVSEQSKALRFIWPNRTLKLQMIGGQPFSKKAGEAHSSDYIIRSYGRDPYIYKSWVPVKPPLELVRGYWKAKPDEEEPPADAPWVVVKRLPKNCGFVKNSRIPIELPKEYQTSSPRRFDYIIPEQLCTFDTVPATLVQLGMLVPSITQAMEPYFVAQELLRRTALGSLDFKDIDLVMMVITSSSAGRLTNYERVEFLGDAVLKLGAAVTCATNNLHFPEGYLSLLKDRLVSNSRLCKAATALGLDQFIITRQYSLKQWRNMLTAPEPPTNTRKMSSKTLADVTEALIGAAYIEGGMSKALRCISLMIPNERWRSLDESRAVLYQVALNDIPLPSTLGPLEELLGYSFNKKSLLIEAITHASYNIPGSAGSSLERLEFLGDSVLDFVVVARLFSVKDPAPIEHYNMHLLRTAVVNGEFLGFLAMEWRTAATQRSVVVRTGQGTADELETVETPGLPLFGFLRHNASGDWVRDQQLAEERHAEMAPGIRDALEHGQRYPWDLLARLRISKVHSDVLEAVIGAVWVDSGSLEECEKLIERVGILRYLDRALRDGVKILHPKEELGRVAQNNKVVYKVDKAKRAARAEVYEVSGELAEGEDVEFLCSVTVGDRCVARVGGAVSKNDAMTKAALEVIRVWEEAGRSWDNVGVVLEEGV.

The segment covering 1–11 has biased composition (low complexity); that stretch reads MSSQDESASSS. The tract at residues 1 to 61 is disordered; it reads MSSQDESASS…EPQPSGNGPR (61 aa). Residues 72-250 form the Helicase ATP-binding domain; the sequence is MFQASMQQNI…MEDLESSLDS (179 aa). 85–92 lines the ATP pocket; the sequence is MDTGSGKT. A DEAH box motif is present at residues 193 to 196; the sequence is DEAH. One can recognise a Helicase C-terminal domain in the interval 415–579; it reads KLQVLLRILR…RYENDMRELD (165 aa). Positions 609 to 712 constitute a Dicer dsRNA-binding fold domain; that stretch reads AKGHLEHFCR…LPIRESDFVD (104 aa). RNase III domains follow at residues 988 to 1127 and 1168 to 1358; these read AQEL…IEGG and LGPL…VDSG. Residues E1208, D1344, and E1347 each coordinate Mg(2+). The 82-residue stretch at 1388 to 1469 folds into the DRBM domain; the sequence is HPKEELGRVA…ALEVIRVWEE (82 aa).

It belongs to the helicase family. Dicer subfamily. Mg(2+) is required as a cofactor. The cofactor is Mn(2+).

In terms of biological role, dicer-like endonuclease involved in cleaving double-stranded RNA in the RNA interference (RNAi) pathway. Produces 21 to 25 bp dsRNAs (siRNAs) which target the selective destruction of homologous RNAs leading to sequence-specific suppression of gene expression, called post-transcriptional gene silencing (PTGS). Part of a broad host defense response against viral infection and transposons. The chain is Dicer-like protein 2 (DCL2) from Pyricularia oryzae (strain 70-15 / ATCC MYA-4617 / FGSC 8958) (Rice blast fungus).